The following is a 534-amino-acid chain: MGFCFSKFGKSQTHEIPISSSSDSSPPHHYQPLPKPTVSQGQTSNPTSNPQPKPKPAPPPPPSTSSGSQIGPILNRPMIDLSALYDLHKELGRGQFGITYKCTDKSNGREYACKSISKRKLIRRKDIEDVRREVMILQHLTGQPNIVEFRGAYEDKDNLHLVMELCSGGELFDRIIKKGSYSEKEAANIFRQIVNVVHVCHFMGVVHRDLKPENFLLVSNEEDSPIKATDFGLSVFIEEGKVYRDIVGSAYYVAPEVLHRNYGKEIDVWSAGVMLYILLSGVPPFWGETEKTIFEAILEGKLDLETSPWPTISESAKDLIRKMLIRDPKKRITAAEALEHPWMTDTKISDKPINSAVLVRMKQFRAMNKLKKLALKVIAENLSEEEIKGLKQTFKNMDTDESGTITFDELRNGLHRLGSKLTESEIKQLMEAADVDKSGTIDYIEFVTATMHRHRLEKEENLIEAFKYFDKDRSGFITRDELKHSMTEYGMGDDATIDEVINDVDTDNDGRINYEEFVAMMRKGTTDSDPKLIR.

The disordered stretch occupies residues 1–72; sequence MGFCFSKFGK…STSSGSQIGP (72 aa). Gly2 is lipidated: N-myristoyl glycine. Positions 16–27 are enriched in low complexity; the sequence is IPISSSSDSSPP. Positions 49-63 are enriched in pro residues; that stretch reads NPQPKPKPAPPPPPS. A Protein kinase domain is found at 85 to 343; that stretch reads YDLHKELGRG…AAEALEHPWM (259 aa). ATP is bound by residues 91–99 and Lys114; that span reads LGRGQFGIT. The active-site Proton acceptor is Asp209. Residue Ser249 is modified to Phosphoserine. The autoinhibitory domain stretch occupies residues 348-378; sequence ISDKPINSAVLVRMKQFRAMNKLKKLALKVI. 4 EF-hand domains span residues 385–420, 421–456, 457–492, and 493–527; these read EEIK…LGSK, LTES…RHRL, EKEE…YGMG, and DDAT…GTTD. Positions 398, 400, 402, 404, 409, 434, 436, 438, 440, 445, 470, 472, 474, 481, 505, 507, 509, 511, and 516 each coordinate Ca(2+).

The protein belongs to the protein kinase superfamily. Ser/Thr protein kinase family. CDPK subfamily.

Its subcellular location is the membrane. It carries out the reaction L-seryl-[protein] + ATP = O-phospho-L-seryl-[protein] + ADP + H(+). It catalyses the reaction L-threonyl-[protein] + ATP = O-phospho-L-threonyl-[protein] + ADP + H(+). With respect to regulation, activated by calcium. Autophosphorylation may play an important role in the regulation of the kinase activity. May play a role in signal transduction pathways that involve calcium as a second messenger. This is Calcium-dependent protein kinase 29 (CPK29) from Arabidopsis thaliana (Mouse-ear cress).